We begin with the raw amino-acid sequence, 148 residues long: MTIWVDADACPKMIKDILFRAAIRTNTNLILVANSYLTYPNSPFIRSILVEKGYDRADHYITSHMKAKDLVITADIPLAAEVIVKQGLAMSPRGELFTANNIKQRLTLRDINEQLRSAGERTGGPSALSAKEKTSFANALDRWLAKNK.

The protein belongs to the UPF0178 family.

The chain is UPF0178 protein lpl0088 from Legionella pneumophila (strain Lens).